The sequence spans 222 residues: 3-demethoxyubiquinol 3-hydroxylase (222 aa).

Fe cation-binding residues include E71, E101, H104, E153, E185, and H188.

It belongs to the COQ7 family. The cofactor is Fe cation.

The protein resides in the cell membrane. The enzyme catalyses a 5-methoxy-2-methyl-3-(all-trans-polyprenyl)benzene-1,4-diol + AH2 + O2 = a 3-demethylubiquinol + A + H2O. It participates in cofactor biosynthesis; ubiquinone biosynthesis. Catalyzes the hydroxylation of 2-nonaprenyl-3-methyl-6-methoxy-1,4-benzoquinol during ubiquinone biosynthesis. This is 3-demethoxyubiquinol 3-hydroxylase from Bordetella bronchiseptica (strain ATCC BAA-588 / NCTC 13252 / RB50) (Alcaligenes bronchisepticus).